Reading from the N-terminus, the 590-residue chain is DNA primase (590 aa).

Residues 37–61 (CPFHKEKTPSFSVSPTKQFYHCFSC) form a CHC2-type zinc finger. In terms of domain architecture, Toprim spans 255-337 (GRILVVEGYM…DKSLHFLFLP (83 aa)). 3 residues coordinate Mg(2+): Glu261, Asp305, and Asp307.

This sequence belongs to the DnaG primase family. Monomer. Interacts with DnaB. Requires Zn(2+) as cofactor. The cofactor is Mg(2+).

The enzyme catalyses ssDNA + n NTP = ssDNA/pppN(pN)n-1 hybrid + (n-1) diphosphate.. Functionally, RNA polymerase that catalyzes the synthesis of short RNA molecules used as primers for DNA polymerase during DNA replication. The sequence is that of DNA primase from Neisseria meningitidis serogroup A / serotype 4A (strain DSM 15465 / Z2491).